The sequence spans 218 residues: Ribonuclease HII (218 aa).

In terms of domain architecture, RNase H type-2 spans 24–218 (ESIAGVDEVG…KLFAVNGSLT (195 aa)). Positions 30, 31, and 126 each coordinate a divalent metal cation.

Belongs to the RNase HII family. Mn(2+) serves as cofactor. Requires Mg(2+) as cofactor.

Its subcellular location is the cytoplasm. The enzyme catalyses Endonucleolytic cleavage to 5'-phosphomonoester.. In terms of biological role, endonuclease that specifically degrades the RNA of RNA-DNA hybrids. This is Ribonuclease HII from Prochlorococcus marinus (strain MIT 9313).